An 81-amino-acid polypeptide reads, in one-letter code: ATP synthase subunit c (81 aa).

The next 2 helical transmembrane spans lie at 3-23 and 57-77; these read PLIA…GAIG and LAFM…LLFA.

It belongs to the ATPase C chain family. In terms of assembly, F-type ATPases have 2 components, F(1) - the catalytic core - and F(0) - the membrane proton channel. F(1) has five subunits: alpha(3), beta(3), gamma(1), delta(1), epsilon(1). F(0) has four main subunits: a(1), b(1), b'(1) and c(10-14). The alpha and beta chains form an alternating ring which encloses part of the gamma chain. F(1) is attached to F(0) by a central stalk formed by the gamma and epsilon chains, while a peripheral stalk is formed by the delta, b and b' chains.

It is found in the cellular thylakoid membrane. In terms of biological role, f(1)F(0) ATP synthase produces ATP from ADP in the presence of a proton or sodium gradient. F-type ATPases consist of two structural domains, F(1) containing the extramembraneous catalytic core and F(0) containing the membrane proton channel, linked together by a central stalk and a peripheral stalk. During catalysis, ATP synthesis in the catalytic domain of F(1) is coupled via a rotary mechanism of the central stalk subunits to proton translocation. Functionally, key component of the F(0) channel; it plays a direct role in translocation across the membrane. A homomeric c-ring of between 10-14 subunits forms the central stalk rotor element with the F(1) delta and epsilon subunits. This Trichodesmium erythraeum (strain IMS101) protein is ATP synthase subunit c.